The sequence spans 332 residues: UDP-3-O-acylglucosamine N-acyltransferase (332 aa).

His-231 (proton acceptor) is an active-site residue.

This sequence belongs to the transferase hexapeptide repeat family. LpxD subfamily. Homotrimer.

It carries out the reaction a UDP-3-O-[(3R)-3-hydroxyacyl]-alpha-D-glucosamine + a (3R)-hydroxyacyl-[ACP] = a UDP-2-N,3-O-bis[(3R)-3-hydroxyacyl]-alpha-D-glucosamine + holo-[ACP] + H(+). Its pathway is bacterial outer membrane biogenesis; LPS lipid A biosynthesis. Catalyzes the N-acylation of UDP-3-O-acylglucosamine using 3-hydroxyacyl-ACP as the acyl donor. Is involved in the biosynthesis of lipid A, a phosphorylated glycolipid that anchors the lipopolysaccharide to the outer membrane of the cell. This is UDP-3-O-acylglucosamine N-acyltransferase from Ruthia magnifica subsp. Calyptogena magnifica.